A 786-amino-acid polypeptide reads, in one-letter code: Endonuclease MutS2 (786 aa).

ATP is bound at residue 332-339; sequence GPNTGGKT. Residues 711–786 form the Smr domain; the sequence is IDLRGMDSEE…GTGVTVVILK (76 aa).

It belongs to the DNA mismatch repair MutS family. MutS2 subfamily. Homodimer. Binds to stalled ribosomes, contacting rRNA.

Endonuclease that is involved in the suppression of homologous recombination and thus may have a key role in the control of bacterial genetic diversity. Functionally, acts as a ribosome collision sensor, splitting the ribosome into its 2 subunits. Detects stalled/collided 70S ribosomes which it binds and splits by an ATP-hydrolysis driven conformational change. Acts upstream of the ribosome quality control system (RQC), a ribosome-associated complex that mediates the extraction of incompletely synthesized nascent chains from stalled ribosomes and their subsequent degradation. Probably generates substrates for RQC. The protein is Endonuclease MutS2 of Clostridium perfringens (strain 13 / Type A).